A 350-amino-acid polypeptide reads, in one-letter code: Holliday junction branch migration complex subunit RuvB (350 aa).

Residues 1 to 183 (MSAERLVNPH…FVAVHRLVFY (183 aa)) are large ATPase domain (RuvB-L). ATP contacts are provided by residues L22, R23, G64, K67, T68, S69, 130–132 (EDF), R173, Y183, and R220. T68 lines the Mg(2+) pocket. The segment at 184–254 (SDDAMTEIVS…VARDALAQLE (71 aa)) is small ATPAse domain (RuvB-S). Positions 257–350 (ELGLDENDRR…ESGPQQATLF (94 aa)) are head domain (RuvB-H). R312 and R317 together coordinate DNA. The tract at residues 331–350 (YPERTLPADDESGPQQATLF) is disordered.

The protein belongs to the RuvB family. As to quaternary structure, homohexamer. Forms an RuvA(8)-RuvB(12)-Holliday junction (HJ) complex. HJ DNA is sandwiched between 2 RuvA tetramers; dsDNA enters through RuvA and exits via RuvB. An RuvB hexamer assembles on each DNA strand where it exits the tetramer. Each RuvB hexamer is contacted by two RuvA subunits (via domain III) on 2 adjacent RuvB subunits; this complex drives branch migration. In the full resolvosome a probable DNA-RuvA(4)-RuvB(12)-RuvC(2) complex forms which resolves the HJ.

It is found in the cytoplasm. It carries out the reaction ATP + H2O = ADP + phosphate + H(+). In terms of biological role, the RuvA-RuvB-RuvC complex processes Holliday junction (HJ) DNA during genetic recombination and DNA repair, while the RuvA-RuvB complex plays an important role in the rescue of blocked DNA replication forks via replication fork reversal (RFR). RuvA specifically binds to HJ cruciform DNA, conferring on it an open structure. The RuvB hexamer acts as an ATP-dependent pump, pulling dsDNA into and through the RuvAB complex. RuvB forms 2 homohexamers on either side of HJ DNA bound by 1 or 2 RuvA tetramers; 4 subunits per hexamer contact DNA at a time. Coordinated motions by a converter formed by DNA-disengaged RuvB subunits stimulates ATP hydrolysis and nucleotide exchange. Immobilization of the converter enables RuvB to convert the ATP-contained energy into a lever motion, pulling 2 nucleotides of DNA out of the RuvA tetramer per ATP hydrolyzed, thus driving DNA branch migration. The RuvB motors rotate together with the DNA substrate, which together with the progressing nucleotide cycle form the mechanistic basis for DNA recombination by continuous HJ branch migration. Branch migration allows RuvC to scan DNA until it finds its consensus sequence, where it cleaves and resolves cruciform DNA. In Chloroflexus aurantiacus (strain ATCC 29366 / DSM 635 / J-10-fl), this protein is Holliday junction branch migration complex subunit RuvB.